A 206-amino-acid polypeptide reads, in one-letter code: Synaptosomal-associated protein 25 (206 aa).

Residues 1–20 (MAEDADMRNELEEMQRRADQ) are compositionally biased toward basic and acidic residues. The tract at residues 1-23 (MAEDADMRNELEEMQRRADQLAD) is disordered. The t-SNARE coiled-coil homology 1 domain maps to 19–81 (DQLADESLES…KEAEKNLTDL (63 aa)). S-palmitoyl cysteine attachment occurs at residues C85, C88, C90, and C92. Position 138 is a phosphothreonine (T138). The 63-residue stretch at 140–202 (DARENEMDEN…DEANQRATKM (63 aa)) folds into the t-SNARE coiled-coil homology 2 domain. S187 is modified (phosphoserine).

This sequence belongs to the SNAP-25 family. Part of the SNARE core complex containing SNAP25, VAMP2 and STX1A. This complex binds CPLX1. Interacts with TRIM9, RIMS1 and SNAPIN. Binds STXBP6. Found in a ternary complex with STX1A and VAMP8. Associates with the BLOC-1 complex. Isoform 1 and isoform 2 interact with BLOC1S6. Interacts with alpha-synuclein/SNCA. Post-translationally, palmitoylated. Cys-85 appears to be the main site, and palmitoylation is required for membrane association.

It localises to the membrane. Its subcellular location is the synapse. It is found in the synaptosome. The protein localises to the cell membrane. Its function is as follows. t-SNARE involved in the molecular regulation of neurotransmitter release. May play an important role in the synaptic function of specific neuronal systems. Associates with proteins involved in vesicle docking and membrane fusion. The polypeptide is Synaptosomal-associated protein 25 (SNAP25) (Gallus gallus (Chicken)).